Here is a 234-residue protein sequence, read N- to C-terminus: MAESTTAVGHDELAALKFVALEGAHSEPIKISCSELSDRLDASSQTASRRLQRLEAAGYLDRDVVTDGQWVSLTKAGETALHKEYTQYQEIFGDNSSVVELTGTVTSGMGEGRHYISLSGYMKQFRERLGYEPFPGTLNIDLDDDSTRTRVAVSSLTGIQIDGWEDDERTFGPATCYPAEIILAEQTAEAAHIIVPERTHHDETQLEVIAPERLRDSLELTDGQRITVQLKPKE.

The tract at residues 1-98 is H-T-H motif-like; sequence MAESTTAVGH…QEIFGDNSSV (98 aa). The tract at residues 99 to 234 is riboflavin kinase; the sequence is VELTGTVTSG…RITVQLKPKE (136 aa). 108 to 113 is a binding site for CDP; the sequence is GMGEGR. Mg(2+) is bound by residues Thr-137 and Asn-139. Positions 199 and 207 each coordinate FMN. Residue 212-215 participates in CDP binding; the sequence is ERLR.

This sequence belongs to the archaeal riboflavin kinase family. Mg(2+) is required as a cofactor.

The catalysed reaction is riboflavin + CTP = CDP + FMN + H(+). The protein operates within cofactor biosynthesis; FMN biosynthesis; FMN from riboflavin (CTP route): step 1/1. Catalyzes the CTP-dependent phosphorylation of riboflavin (vitamin B2) to form flavin mononucleotide (FMN). This chain is Riboflavin kinase (ribK), found in Haloquadratum walsbyi (strain DSM 16790 / HBSQ001).